The following is a 134-amino-acid chain: Small ribosomal subunit protein uS11 (134 aa).

A disordered region spans residues 114 to 134 (TPVPHNGTRPPRKWFKRQEKR). Residues 123-134 (PPRKWFKRQEKR) are compositionally biased toward basic residues.

It belongs to the universal ribosomal protein uS11 family. In terms of assembly, part of the 30S ribosomal subunit. Interacts with proteins S7 and S18. Binds to IF-3.

In terms of biological role, located on the platform of the 30S subunit, it bridges several disparate RNA helices of the 16S rRNA. Forms part of the Shine-Dalgarno cleft in the 70S ribosome. The chain is Small ribosomal subunit protein uS11 from Mesomycoplasma hyopneumoniae (strain 232) (Mycoplasma hyopneumoniae).